Here is a 126-residue protein sequence, read N- to C-terminus: Large ribosomal subunit protein bL12 (126 aa).

The protein belongs to the bacterial ribosomal protein bL12 family. In terms of assembly, homodimer. Part of the ribosomal stalk of the 50S ribosomal subunit. Forms a multimeric L10(L12)X complex, where L10 forms an elongated spine to which 2 to 4 L12 dimers bind in a sequential fashion. Binds GTP-bound translation factors.

Forms part of the ribosomal stalk which helps the ribosome interact with GTP-bound translation factors. Is thus essential for accurate translation. In Nocardia farcinica (strain IFM 10152), this protein is Large ribosomal subunit protein bL12.